The primary structure comprises 464 residues: NADH dehydrogenase [ubiquinone] flavoprotein 1, mitochondrial (464 aa).

A mitochondrion-targeting transit peptide spans 1-20 (MLAARHFLGGLVPVRVSVRF). The residue at position 81 (lysine 81) is an N6-acetyllysine; alternate. N6-succinyllysine; alternate is present on lysine 81. 87–96 (GRGGAGFPTG) contributes to the NADH binding site. Lysine 104 is modified (N6-acetyllysine). 199 to 247 (RGAGAYICGEETALIESIEGKQGKPRLKPPFPADVGVFGCPTTVANVET) is an FMN binding site. Arginine 257 carries the post-translational modification Omega-N-methylarginine. Lysine 375 bears the N6-acetyllysine mark. Cysteine 379, cysteine 382, cysteine 385, and cysteine 425 together coordinate [4Fe-4S] cluster.

Belongs to the complex I 51 kDa subunit family. Core subunit of respiratory chain NADH dehydrogenase (Complex I) which is composed of 45 different subunits. This is a component of the flavoprotein-sulfur (FP) fragment of the enzyme. Interacts with RAB5IF. The cofactor is FMN. Requires [4Fe-4S] cluster as cofactor.

It is found in the mitochondrion inner membrane. It catalyses the reaction a ubiquinone + NADH + 5 H(+)(in) = a ubiquinol + NAD(+) + 4 H(+)(out). Its function is as follows. Core subunit of the mitochondrial membrane respiratory chain NADH dehydrogenase (Complex I) which catalyzes electron transfer from NADH through the respiratory chain, using ubiquinone as an electron acceptor. Part of the peripheral arm of the enzyme, where the electrons from NADH are accepted by flavin mononucleotide (FMN) and then passed along a chain of iron-sulfur clusters by electron tunnelling to the final acceptor ubiquinone. Contains FMN, which is the initial electron acceptor as well as one iron-sulfur cluster. The chain is NADH dehydrogenase [ubiquinone] flavoprotein 1, mitochondrial from Mus musculus (Mouse).